Here is a 292-residue protein sequence, read N- to C-terminus: MFSRLSAVSLRQGFVVQRRLFSYARPLLNSGSQATANQNTARETNNEYQYSGTRIVPKLSTFYSANPHHEAHIDNLEALMRKYIKYPTVQVEERPMWLSLQEYALIGGGSRLKSTQYKQLLFLLNRLNSIDPQLMVPEISNTLAKYHKKTKLQPQRDTLKELDEFGRSLAIGRRKTATAKVYVVRGEGQILVNDRALNDYFVKMKDRESIMYPLKAIDSVGKYNIFAMVSGGGTTAQADAIMHAIGKALVTFNPLLKTRLHRSGVLTRDYRHVERKKPGKRKARKMPTWVKR.

Residues 273 to 292 (VERKKPGKRKARKMPTWVKR) form a disordered region.

This sequence belongs to the universal ribosomal protein uS9 family.

The protein localises to the mitochondrion. The chain is Small ribosomal subunit protein uS9m (MRPS9) from Kluyveromyces marxianus (Yeast).